A 173-amino-acid chain; its full sequence is Gamma-crystallin S-2 (173 aa).

Beta/gamma crystallin 'Greek key' domains follow at residues 2–40 (GKIIFYEDRNFQGRNYECSSDCADLSPYFSRCNSIRVES) and 41–83 (DWWV…RVPT). A connecting peptide region spans residues 84–88 (HTQRP). Beta/gamma crystallin 'Greek key' domains follow at residues 89 to 129 (YRMR…HVMG) and 130 to 172 (AYWI…RRIM).

This sequence belongs to the beta/gamma-crystallin family.

Crystallins are the dominant structural components of the vertebrate eye lens. This is Gamma-crystallin S-2 (GS-2) from Chiloscyllium indicum (Slender bamboo shark).